The primary structure comprises 474 residues: Bifunctional protein HldE (474 aa).

The ribokinase stretch occupies residues 1–318 (MKLSMPRFDQ…RAVQREQGSE (318 aa)). 194-197 (NLSE) serves as a coordination point for ATP. The active site involves Asp-263. The tract at residues 343–474 (FTNGCFDILH…AIVEKIRQKG (132 aa)) is cytidylyltransferase.

The protein in the N-terminal section; belongs to the carbohydrate kinase PfkB family. It in the C-terminal section; belongs to the cytidylyltransferase family. Homodimer.

The enzyme catalyses D-glycero-beta-D-manno-heptose 7-phosphate + ATP = D-glycero-beta-D-manno-heptose 1,7-bisphosphate + ADP + H(+). It catalyses the reaction D-glycero-beta-D-manno-heptose 1-phosphate + ATP + H(+) = ADP-D-glycero-beta-D-manno-heptose + diphosphate. It functions in the pathway nucleotide-sugar biosynthesis; ADP-L-glycero-beta-D-manno-heptose biosynthesis; ADP-L-glycero-beta-D-manno-heptose from D-glycero-beta-D-manno-heptose 7-phosphate: step 1/4. It participates in nucleotide-sugar biosynthesis; ADP-L-glycero-beta-D-manno-heptose biosynthesis; ADP-L-glycero-beta-D-manno-heptose from D-glycero-beta-D-manno-heptose 7-phosphate: step 3/4. Functionally, catalyzes the phosphorylation of D-glycero-D-manno-heptose 7-phosphate at the C-1 position to selectively form D-glycero-beta-D-manno-heptose-1,7-bisphosphate. Its function is as follows. Catalyzes the ADP transfer from ATP to D-glycero-beta-D-manno-heptose 1-phosphate, yielding ADP-D-glycero-beta-D-manno-heptose. This chain is Bifunctional protein HldE, found in Pseudomonas aeruginosa (strain UCBPP-PA14).